Reading from the N-terminus, the 245-residue chain is Type II restriction enzyme EcoRV (245 aa).

The Mg(2+) site is built by Glu-45, Asp-74, and Asp-90. Residues Asp-74, Asp-90, and Lys-92 contribute to the active site.

As to quaternary structure, homodimer. Mg(2+) serves as cofactor.

The catalysed reaction is Endonucleolytic cleavage of DNA to give specific double-stranded fragments with terminal 5'-phosphates.. A P subtype restriction enzyme that recognizes the double-stranded sequence 5'-GATATC-3' and cleaves after T-3. This chain is Type II restriction enzyme EcoRV (ecoRVR), found in Escherichia coli.